Reading from the N-terminus, the 535-residue chain is CTP synthase (535 aa).

The interval 1-267 (MTKYIFVTGG…DKLVCDHMKL (267 aa)) is amidoligase domain. Residue Ser13 participates in CTP binding. Ser13 lines the UTP pocket. Residue 14 to 19 (SLGKGI) participates in ATP binding. Residue Tyr54 participates in L-glutamine binding. Position 71 (Asp71) interacts with ATP. Mg(2+)-binding residues include Asp71 and Glu141. CTP contacts are provided by residues 148-150 (DIE), 188-193 (KTKPTQ), and Lys224. Residues 188–193 (KTKPTQ) and Lys224 each bind UTP. One can recognise a Glutamine amidotransferase type-1 domain in the interval 292–534 (TISLVGKYVE…IGASVQAAEQ (243 aa)). Gly354 provides a ligand contact to L-glutamine. The active-site Nucleophile; for glutamine hydrolysis is the Cys381. L-glutamine-binding positions include 382-385 (LGMQ), Glu405, and Arg462. Residues His507 and Glu509 contribute to the active site.

This sequence belongs to the CTP synthase family. As to quaternary structure, homotetramer.

It carries out the reaction UTP + L-glutamine + ATP + H2O = CTP + L-glutamate + ADP + phosphate + 2 H(+). The enzyme catalyses L-glutamine + H2O = L-glutamate + NH4(+). The catalysed reaction is UTP + NH4(+) + ATP = CTP + ADP + phosphate + 2 H(+). The protein operates within pyrimidine metabolism; CTP biosynthesis via de novo pathway; CTP from UDP: step 2/2. Its activity is regulated as follows. Allosterically activated by GTP, when glutamine is the substrate; GTP has no effect on the reaction when ammonia is the substrate. The allosteric effector GTP functions by stabilizing the protein conformation that binds the tetrahedral intermediate(s) formed during glutamine hydrolysis. Inhibited by the product CTP, via allosteric rather than competitive inhibition. Its function is as follows. Catalyzes the ATP-dependent amination of UTP to CTP with either L-glutamine or ammonia as the source of nitrogen. Regulates intracellular CTP levels through interactions with the four ribonucleotide triphosphates. This is CTP synthase from Bacillus velezensis (strain DSM 23117 / BGSC 10A6 / LMG 26770 / FZB42) (Bacillus amyloliquefaciens subsp. plantarum).